Here is a 454-residue protein sequence, read N- to C-terminus: ABSCISIC ACID-INSENSITIVE 5-like protein 6 (454 aa).

Phosphoserine is present on residues S32, S55, and S126. T169 is subject to Phosphothreonine. The region spanning 372–435 (IERRQKRMIK…KNQLLEPLRQ (64 aa)) is the bZIP domain. The interval 374–393 (RRQKRMIKNRESAARSRARK) is basic motif. The leucine-zipper stretch occupies residues 400–414 (LEAEIAQLKELNEEL).

The protein belongs to the bZIP family. ABI5 subfamily. As to quaternary structure, DNA-binding heterodimer. Interacts with ABI3 and the AFP proteins AFP1, AFP2, AFP3 and AFP4. Expressed in roots and flowers.

It is found in the nucleus. Binds to the ABA-responsive element (ABRE). Mediates stress-responsive ABA signaling. This Arabidopsis thaliana (Mouse-ear cress) protein is ABSCISIC ACID-INSENSITIVE 5-like protein 6 (ABF3).